The primary structure comprises 139 residues: ATP synthase epsilon chain (139 aa).

The protein belongs to the ATPase epsilon chain family. In terms of assembly, F-type ATPases have 2 components, CF(1) - the catalytic core - and CF(0) - the membrane proton channel. CF(1) has five subunits: alpha(3), beta(3), gamma(1), delta(1), epsilon(1). CF(0) has three main subunits: a, b and c.

It localises to the cell inner membrane. Functionally, produces ATP from ADP in the presence of a proton gradient across the membrane. This Shigella boydii serotype 18 (strain CDC 3083-94 / BS512) protein is ATP synthase epsilon chain.